Here is a 201-residue protein sequence, read N- to C-terminus: MGSRKCGSCLSSLLIPLALWSIIVNILLYFPNGQASYASSNKLTNYVWYFEGICFSGIMMLVVAAVLLVLENDNNYKCCQSENCSKKYMTVLSMIFSALGIAFSGYCLVISALGLLQGPYCRTLDGWEYAFEGTAGRFLTDSREWIQCLEPAHVVEWNIILFSILIALSGLQVIVCLIRVVIQLSKSLCGTYSVIIQPGII.

Residues 1–9 (MGSRKCGSC) are Cytoplasmic-facing. The helical transmembrane segment at 10–30 (LSSLLIPLALWSIIVNILLYF) threads the bilayer. The Extracellular portion of the chain corresponds to 31 to 49 (PNGQASYASSNKLTNYVWY). The helical transmembrane segment at 50–70 (FEGICFSGIMMLVVAAVLLVL) threads the bilayer. The Cytoplasmic segment spans residues 71–93 (ENDNNYKCCQSENCSKKYMTVLS). The helical transmembrane segment at 94 to 114 (MIFSALGIAFSGYCLVISALG) threads the bilayer. Residues 115-157 (LLQGPYCRTLDGWEYAFEGTAGRFLTDSREWIQCLEPAHVVEW) lie on the Extracellular side of the membrane. The chain crosses the membrane as a helical span at residues 158 to 178 (NIILFSILIALSGLQVIVCLI). Over 179 to 201 (RVVIQLSKSLCGTYSVIIQPGII) the chain is Cytoplasmic.

Belongs to the L6 tetraspanin family.

It localises to the membrane. This is Transmembrane 4 L6 family member 18 (TM4SF18) from Bos taurus (Bovine).